The sequence spans 379 residues: MKILRKNHPLLKIVNHSFIDLPTPSNISSWWNFGSLLGMCLMIQILTGLFLAMHYTSDTTTAFSSVAHICRDVNYGWLIRYLHANGASMFFICLFIHVGRGIYYGSYTLSETWNIGIILFLTTMATAFVGYVLPWGQMSFWGATVITNLLSAIPYIGNTLVEWIWGGFSVDKATLTRFFAFHFILPFIITAFALVHLLFLHETGSNNPSGLNSDSDKIPFHPYYTTKDLLGIFLLLLVLMILALFFPDILGDPDNFTPANPLNTPAHIKPEWYFLFAYAILRSIPNKLGGVLALVLSILILAAFPLLNTSKQHGLIFRPITQVIYWIFIXNLLVLTWIGGQPVEYPXTMIGQIASITYFAIIIILIPVSNTIENNIIKL.

The next 4 membrane-spanning stretches (helical) occupy residues 33 to 53, 77 to 98, 113 to 133, and 178 to 198; these read FGSLLGMCLMIQILTGLFLAM, WLIRYLHANGASMFFICLFIHV, WNIGIILFLTTMATAFVGYVL, and FFAFHFILPFIITAFALVHLL. Residues histidine 83 and histidine 97 each coordinate heme b. Residues histidine 182 and histidine 196 each contribute to the heme b site. Histidine 201 is an a ubiquinone binding site. 4 helical membrane passes run 226–246, 288–308, 320–340, and 347–367; these read TKDLLGIFLLLLVLMILALFF, LGGVLALVLSILILAAFPLLN, ITQVIYWIFIXNLLVLTWIGG, and XTMIGQIASITYFAIIIILIP.

The protein belongs to the cytochrome b family. The cytochrome bc1 complex contains 11 subunits: 3 respiratory subunits (MT-CYB, CYC1 and UQCRFS1), 2 core proteins (UQCRC1 and UQCRC2) and 6 low-molecular weight proteins (UQCRH/QCR6, UQCRB/QCR7, UQCRQ/QCR8, UQCR10/QCR9, UQCR11/QCR10 and a cleavage product of UQCRFS1). This cytochrome bc1 complex then forms a dimer. Heme b serves as cofactor.

Its subcellular location is the mitochondrion inner membrane. In terms of biological role, component of the ubiquinol-cytochrome c reductase complex (complex III or cytochrome b-c1 complex) that is part of the mitochondrial respiratory chain. The b-c1 complex mediates electron transfer from ubiquinol to cytochrome c. Contributes to the generation of a proton gradient across the mitochondrial membrane that is then used for ATP synthesis. The protein is Cytochrome b (MT-CYB) of Akodon boliviensis (Bolivian grass mouse).